A 92-amino-acid chain; its full sequence is Cell division topological specificity factor (92 aa).

The protein belongs to the MinE family.

Prevents the cell division inhibition by proteins MinC and MinD at internal division sites while permitting inhibition at polar sites. This ensures cell division at the proper site by restricting the formation of a division septum at the midpoint of the long axis of the cell. In Gluconobacter oxydans (strain 621H) (Gluconobacter suboxydans), this protein is Cell division topological specificity factor.